Consider the following 975-residue polypeptide: MVQIDLPAESAVRIRYPTLTKKLRKRSTLVIIVGLLLLCIITSTHISHNFSGSDTPKCRSIYMYPSYARIDGFDSRHTKLAKKYHLYLYREQGKDKEPKHGDEIQLDGIPVLFIPGNAGSFKQARSIAAASANLYFDHKSTIQNSNAKNMDYFTADFNEDFTAFHGQTMLDQAVYLNDAVRYILSMYAQSAAYKESNRPLPKSVILLGHSMGGIVARLMLTLPNHIPESVNTILTLSSPHSTAPVTFDGDILKLYDRVNSYWTSAMNDMGSYFRNNVSVISITGGILDDILPADYTNLQGIVPESNGFTTFTTTIPELWTPIDHLAIVWCDQLRYLLAKYILEIVNDDAGGKTATLDIRMRKGRKFFLSGLERITDADKLIDKNLSAPAVDFSDTESVPENHLLVLNSSESMSTGYAFNISKSVDYSFEMLTSLVQFDIFFCKDIYGKDCINGFSSFSKVPHSTSLQKFPTDSSWGESVSPFRFISLNGSLLQGFQIIVFQGSMKKKEDFVLAKYSDDKSIETASDGLWKLSLFPFRMSLKNKHSFVHGLAFPNLWSSLISFNLKTTFSDEIDSMFRPMMRQYVNNPYETKWHLLAASSSHEINMHNISPFIPLDDTIDKSLNLMFFIPPGEEISLRLSINWKLTLKMLYIRFRLAFASIPISIIALVLCYQFYYYDSPDSKFISFDTGLMNVLNNHSLLIFLFLSVGPIAINHKAILTLLHYLDPISLSKPSSDSHMLNNNYMLGLRETFVWWIGPVFFIISVALLFIILRLINVIEFAVIKISSAITRYTRITFPDPLNDMTHHKLLFNNRQLLGVCFISLGVMVYVPYQFAFILVSLIQMWNCMKLAVFTNRNNAKYSNIHNYNVSFLMLTIFMIPINAPIVVVFLRNFAIRWETAFRSHHNFLAIAPTLLLTLRNSQCNIPIIKNRMNWLIVVSILGYLSFYSFMYGIRNLYWVYHISNILNGVLFFLTIL.

A helical transmembrane segment spans residues 27–47; the sequence is STLVIIVGLLLLCIITSTHIS. Asn-49 carries an N-linked (GlcNAc...) asparagine glycan. The active site involves Ser-210. N-linked (GlcNAc...) asparagine glycosylation is found at Asn-276, Asn-384, Asn-407, Asn-419, and Asn-488. Residues 655-675 traverse the membrane as a helical segment; that stretch reads LAFASIPISIIALVLCYQFYY. The N-linked (GlcNAc...) asparagine glycan is linked to Asn-696. The next 3 membrane-spanning stretches (helical) occupy residues 699–719, 751–771, and 818–838; these read LLIF…AILT, FVWW…FIIL, and VCFI…FILV. The N-linked (GlcNAc...) asparagine glycan is linked to Asn-867. 3 helical membrane passes run 868–888, 932–952, and 955–975; these read VSFL…VVVF, NWLI…MYGI, and LYWV…LTIL.

It belongs to the GPI inositol-deacylase family.

The protein localises to the endoplasmic reticulum membrane. In terms of biological role, involved in inositol deacylation of GPI-anchored proteins which plays important roles in the quality control and ER-associated degradation of GPI-anchored proteins. This is GPI inositol-deacylase (BST1) from Kluyveromyces lactis (strain ATCC 8585 / CBS 2359 / DSM 70799 / NBRC 1267 / NRRL Y-1140 / WM37) (Yeast).